We begin with the raw amino-acid sequence, 823 residues long: Trimethylamine-N-oxide reductase (823 aa).

Positions 1 to 32 form a signal peptide, tat-type signal; sequence MKQSRRQFLKNMSAMAATFAMPNFLIAQNAFA. Serine 181 is a binding site for Mo-bis(molybdopterin guanine dinucleotide).

Belongs to the prokaryotic molybdopterin-containing oxidoreductase family. It depends on Mo-bis(molybdopterin guanine dinucleotide) as a cofactor. In terms of processing, predicted to be exported by the Tat system. The position of the signal peptide cleavage has not been experimentally proven.

It localises to the periplasm. The catalysed reaction is trimethylamine + 2 Fe(III)-[cytochrome c] + H2O = trimethylamine N-oxide + 2 Fe(II)-[cytochrome c] + 3 H(+). In terms of biological role, reduces trimethylamine-N-oxide (TMAO) into trimethylamine; an anaerobic reaction coupled to energy-yielding reactions. In Pasteurella multocida (strain Pm70), this protein is Trimethylamine-N-oxide reductase (torA).